We begin with the raw amino-acid sequence, 277 residues long: Release factor glutamine methyltransferase (277 aa).

Residues 119–123 (GTGTG), aspartate 142, and asparagine 184 each bind S-adenosyl-L-methionine. 184–187 (NPPY) lines the substrate pocket.

Belongs to the protein N5-glutamine methyltransferase family. PrmC subfamily.

It carries out the reaction L-glutaminyl-[peptide chain release factor] + S-adenosyl-L-methionine = N(5)-methyl-L-glutaminyl-[peptide chain release factor] + S-adenosyl-L-homocysteine + H(+). Its function is as follows. Methylates the class 1 translation termination release factors RF1/PrfA and RF2/PrfB on the glutamine residue of the universally conserved GGQ motif. This chain is Release factor glutamine methyltransferase, found in Enterococcus faecalis (strain ATCC 700802 / V583).